We begin with the raw amino-acid sequence, 631 residues long: MQDLPSSIADISDPELLGQWLEKYNEAYRAGKPMISDAHYDLLVERLREIAPDHGFLSAVEAETFADKREVRHPAPMLSTEKAYDKQSLERFVERVYKEAAQIGVTDVLFQVTPKLDGLAARDDGQILATRGNGYAGYDITNALEKGVIPQGGRGLGLGEIVAVQSYFQENLADRFEHPRNMVVGIISSDVLNISAKQALEDKQVHFVPYATLNKWEGSGKELLENSEKITQDLIQATDYPMDGMVASVMNQDVRDHMGATSHHYRWQIAIKAKGETGVTTVNAITWQVGRTGNVTPVLEVEPLKLSGATIRRVTAHNAGRIREKGAGVGASIEVIRSGEVIPKLENVLTPSDDTLIPENCPVCETPLEWNNDFLKCPNLNCKARVEQRIRHWFRILGNADWFGIKTVERLVAGGFDSLEKIYAMTEEDFLSLEFGPVQSKNLAEAINLSKSRPVEDWRFLAAFGISDLGEGDSRKILSFFPLEELLDKTRDDIVALHGFGDVTSISIEKGLKALGPTIRHMLDLGFNLQPTPLKSEMDVSSPISGKGVVFTGSMETGSRKDMEENARSLGANVQKAVTGKTDYLICGAKVGAKKTQKAQDLGVTVLTEQEYLQLVEGGESQSSPEQMSLF.

NAD(+) is bound by residues 37–41 (DAHYD) and 79–80 (ST). Lys-115 serves as the catalytic N6-AMP-lysine intermediate. The NAD(+) site is built by Arg-131, Glu-160, and Lys-272. The Zn(2+) site is built by Cys-361, Cys-364, Cys-377, and Cys-382. One can recognise a BRCT domain in the interval 539–630 (DVSSPISGKG…SQSSPEQMSL (92 aa)).

Belongs to the NAD-dependent DNA ligase family. LigA subfamily. The cofactor is Mg(2+). It depends on Mn(2+) as a cofactor.

The enzyme catalyses NAD(+) + (deoxyribonucleotide)n-3'-hydroxyl + 5'-phospho-(deoxyribonucleotide)m = (deoxyribonucleotide)n+m + AMP + beta-nicotinamide D-nucleotide.. DNA ligase that catalyzes the formation of phosphodiester linkages between 5'-phosphoryl and 3'-hydroxyl groups in double-stranded DNA using NAD as a coenzyme and as the energy source for the reaction. It is essential for DNA replication and repair of damaged DNA. This chain is DNA ligase, found in Desulfatibacillum aliphaticivorans.